The following is a 341-amino-acid chain: Phenylalanine--tRNA ligase alpha subunit (341 aa).

E254 contributes to the Mg(2+) binding site.

It belongs to the class-II aminoacyl-tRNA synthetase family. Phe-tRNA synthetase alpha subunit type 1 subfamily. As to quaternary structure, tetramer of two alpha and two beta subunits. It depends on Mg(2+) as a cofactor.

The protein localises to the cytoplasm. The catalysed reaction is tRNA(Phe) + L-phenylalanine + ATP = L-phenylalanyl-tRNA(Phe) + AMP + diphosphate + H(+). The protein is Phenylalanine--tRNA ligase alpha subunit of Chlorobium limicola (strain DSM 245 / NBRC 103803 / 6330).